Here is a 1305-residue protein sequence, read N- to C-terminus: Serine protease EspC (1305 aa).

A signal peptide spans 1-53; it reads MNKIYALKYCHATGGLIAVSELASRVMKKAARGSLLALFNLSLYGAFLSASQA. The Peptidase S6 domain occupies 55-297; it reads QLNIDNVWAR…SILNQYDENT (243 aa). Catalysis depends on charge relay system residues His-125, Asp-153, and Ser-256. The Autotransporter domain maps to 1039–1305; the sequence is DTQGDAGVWA…AINANFRYSF (267 aa).

Cleaved to release the mature protein from the outer membrane.

Its subcellular location is the periplasm. The protein resides in the secreted. It localises to the cell surface. The protein localises to the cell outer membrane. With respect to regulation, inhibition of cytotoxic activity by phenylmethylsulfonyl fluoride. Its function is as follows. Serine protease with enterotoxic and cytotoxic activities. Cleaves fodrin, but does not cause its redistribution within epithelial cells. The exact role of EspC in EPEC pathogenesis is still unknown. This chain is Serine protease EspC (espC), found in Escherichia coli O127:H6 (strain E2348/69 / EPEC).